A 281-amino-acid polypeptide reads, in one-letter code: Urease accessory protein UreD (281 aa).

Residues 1–25 (MLNTLEPQPCETDALSPRLQRSTGS) are disordered.

Belongs to the UreD family. UreD, UreF and UreG form a complex that acts as a GTP-hydrolysis-dependent molecular chaperone, activating the urease apoprotein by helping to assemble the nickel containing metallocenter of UreC. The UreE protein probably delivers the nickel.

The protein localises to the cytoplasm. Its function is as follows. Required for maturation of urease via the functional incorporation of the urease nickel metallocenter. The protein is Urease accessory protein UreD of Dinoroseobacter shibae (strain DSM 16493 / NCIMB 14021 / DFL 12).